Consider the following 621-residue polypeptide: MALMQIAEPGTAADPHQRRLAIGIDLGTTHSLVASVLSAVPTVMRDHDGKYLLPSVVRYLGGGGIHVGYPAVAAAGQDPHNTIASAKRLMGRGHGDVQTLAGHLPYDLVPGEGMVRLRTVAGEKSPVEVSAEILRVLKERAVETLGGEPEGAVITVPAYFDEAQRQATKDAARLAGLNVLRLLAEPTAAAVAYGLDKGSEGIFAIYDLGGGTFDISILRLQAGVFEVLATAGDSALGGDDMDHALAEWLMQEEGGDASDPLWRRQVLQQARTAKEALSAVAETMIVLTPSGRAAREIKLSRGRLESLIQPVIQRSLPACRRALRDAGLKLDEIEGVVLVGGATRVPAVRAMVEEFFRQKPLTDIDPDQVVAIGAAIQADALVGNQREDLLLMDVLPLSLGLETMGGLVEKIIPRNTPIPVARAQEFTTFKDGQTAMSIHVVQGERDLVQDCRSLARFSLRGIPPMVAGAARIRVTFQVDADGLLAVRAEETSTGVRSEVVVKPSYGLNDEEIARMLQDSFIHGAEDVVRRRLSEAKVEGERVREALRTALAADADLLDPAEREALDKAGTALTNALSGDDAGVITAAAEAVETAAEPLVQRRMDSALRRAITGRSIDELGD.

The protein belongs to the heat shock protein 70 family.

Functionally, chaperone involved in the maturation of iron-sulfur cluster-containing proteins. Has a low intrinsic ATPase activity which is markedly stimulated by HscB. The sequence is that of Chaperone protein HscA homolog from Acidithiobacillus ferrooxidans (strain ATCC 23270 / DSM 14882 / CIP 104768 / NCIMB 8455) (Ferrobacillus ferrooxidans (strain ATCC 23270)).